The following is a 422-amino-acid chain: Vitamin D3 receptor (422 aa).

A DNA-binding region (nuclear receptor) is located at residues 21–96 (PRICGVCGDR…IGMMKEFILT (76 aa)). 8 residues coordinate Zn(2+): Cys24, Cys27, Cys41, Cys44, Cys60, Cys66, Cys76, and Cys79. 2 NR C4-type zinc fingers span residues 24–44 (CGVC…CEGC) and 60–84 (CPFN…LKRC). Residues 97 to 126 (DEEVQRKREMIMKRKEEEALKDSLRPKLSE) are hinge. Residues 127–418 (EQQHIIAILL…LTPLVLEVFG (292 aa)) enclose the NR LBD domain. Tyr143 is a calcitriol binding site. Positions 161-185 (VSTGSYSPRPTLSFSGDSSSNSDLY) are disordered. Residues 162–172 (STGSYSPRPTL) show a composition bias toward polar residues. Over residues 173 to 182 (SFSGDSSSNS) the composition is skewed to low complexity. Residue Ser232 coordinates calcitriol. An interaction with coactivator LXXLL motif region spans residues 241-259 (KMIPGFRDLTSDDQIVLLK). Calcitriol-binding residues include Arg269, Ser273, His300, and His392. The short motif at 411–419 (PLVLEVFGN) is the 9aaTAD element.

The protein belongs to the nuclear hormone receptor family. NR1 subfamily. In terms of assembly, homodimer in the absence of bound vitamin D3. Heterodimer with RXRA after vitamin D3 binding. Interacts with MED1, NCOA1, NCOA2, NCOA3 and NCOA6 coactivators, leading to a strong increase of transcription of target genes. Interacts with the corepressor NCOR1. Interacts with SNW1. Interacts with IRX4, the interaction does not affect its transactivation activity. Interacts with CRY1. Interacts with CRY2 in a ligand-dependent manner. Ubiquitinated by UBR5, leading to its degradation: UBR5 specifically recognizes and binds ligand-bound VDR when it is not associated with coactivators (NCOAs). In presence of NCOAs, the UBR5-degron is not accessible, preventing its ubiquitination and degradation.

The protein localises to the nucleus. It is found in the cytoplasm. Functionally, nuclear receptor for calcitriol, the active form of vitamin D3 which mediates the action of this vitamin on cells. Enters the nucleus upon vitamin D3 binding where it forms heterodimers with the retinoid X receptor/RXR. The VDR-RXR heterodimers bind to specific response elements on DNA and activate the transcription of vitamin D3-responsive target genes. Plays a central role in calcium homeostasis. Also functions as a receptor for the secondary bile acid lithocholic acid (LCA) and its metabolites. The sequence is that of Vitamin D3 receptor (Vdr) from Mus musculus (Mouse).